The following is a 336-amino-acid chain: MFYYLIRKLLFLIDPEKAHTLVLMYLNSKKIQILRKIFIKPIPLKQIKCMGLTFNNKIGLAAGMDKNGDYIDSLSKIGFGFIEVGTVTPLPQYGNPKPRIFRVPSIEGIINRMGFNNLGIDYLVNNVKKSKFKGIIGINIGKNKDTKIEDAIKDYLICIEKIYFYASYIAINISSPNTINLRKLQYGILFENLLRDIKKKQSEMHSKYSKYVPIVIKISPDLSKKELIHISNKLIHYKIDGVIATNTTLDHSSIPKIKNNKEEGGLSGLPLQKKSNDVISILYKNLKRKIPIIGVGGINSINSAREKIMCGANLIQVYSGLIYHGPNFIREIIRNL.

FMN is bound by residues 62-66 (AGMDK) and T86. Position 66 (K66) interacts with substrate. Position 111–115 (111–115 (NRMGF)) interacts with substrate. N139 and N172 together coordinate FMN. Position 172 (N172) interacts with substrate. S175 serves as the catalytic Nucleophile. Residue N177 participates in substrate binding. FMN-binding residues include K217 and T245. Residue 246–247 (NT) participates in substrate binding. Residues G268, G297, and 318–319 (YS) contribute to the FMN site.

This sequence belongs to the dihydroorotate dehydrogenase family. Type 2 subfamily. In terms of assembly, monomer. It depends on FMN as a cofactor.

It localises to the cell membrane. It carries out the reaction (S)-dihydroorotate + a quinone = orotate + a quinol. It functions in the pathway pyrimidine metabolism; UMP biosynthesis via de novo pathway; orotate from (S)-dihydroorotate (quinone route): step 1/1. Catalyzes the conversion of dihydroorotate to orotate with quinone as electron acceptor. In Buchnera aphidicola subsp. Schizaphis graminum (strain Sg), this protein is Dihydroorotate dehydrogenase (quinone).